Reading from the N-terminus, the 145-residue chain is Neuromedin-S (145 aa).

The first 25 residues, 1-25, serve as a signal peptide directing secretion; the sequence is MKYLAQFPSILAIYCFCLLQIPSSG. 3 consecutive propeptides follow at residues 26 to 64, 65 to 100, and 101 to 103; these read FPRP…IYKR, FLFH…ADRR, and MKT. Asparagine 136 carries the post-translational modification Asparagine amide. Residues 139-145 constitute a propeptide that is removed on maturation; the sequence is NLDFDTW.

This sequence belongs to the NmU family.

The protein localises to the secreted. Its function is as follows. Implicated in the regulation of circadian rhythms through autocrine and/or paracrine actions. The chain is Neuromedin-S (NMS) from Bos taurus (Bovine).